Here is a 163-residue protein sequence, read N- to C-terminus: SsrA-binding protein (163 aa).

Belongs to the SmpB family.

It localises to the cytoplasm. Required for rescue of stalled ribosomes mediated by trans-translation. Binds to transfer-messenger RNA (tmRNA), required for stable association of tmRNA with ribosomes. tmRNA and SmpB together mimic tRNA shape, replacing the anticodon stem-loop with SmpB. tmRNA is encoded by the ssrA gene; the 2 termini fold to resemble tRNA(Ala) and it encodes a 'tag peptide', a short internal open reading frame. During trans-translation Ala-aminoacylated tmRNA acts like a tRNA, entering the A-site of stalled ribosomes, displacing the stalled mRNA. The ribosome then switches to translate the ORF on the tmRNA; the nascent peptide is terminated with the 'tag peptide' encoded by the tmRNA and targeted for degradation. The ribosome is freed to recommence translation, which seems to be the essential function of trans-translation. This chain is SsrA-binding protein, found in Shewanella baltica (strain OS223).